A 637-amino-acid polypeptide reads, in one-letter code: Zinc finger protein rsv2 (637 aa).

6 disordered regions span residues 1 to 41 (MDTT…SKMN), 145 to 164 (SNHQ…PTSA), 169 to 207 (IITA…QPFS), 221 to 363 (TGAI…STAL), 404 to 427 (QDSF…TRSY), and 440 to 558 (SVNP…GAQR). Over residues 172-189 (ANSSPSGNAGSNASASMS) the composition is skewed to low complexity. A compositionally biased stretch (polar residues) spans 196 to 207 (PSASTINDQPFS). Residues 279 to 296 (SDLKRSLGHNQKSDRVSK) show a composition bias toward basic and acidic residues. Over residues 298–344 (VSPQHQANPSTLNNPLKTQNFDSSKNLYTDNKDSSLVSPTGLQSRME) the composition is skewed to polar residues. Composition is skewed to basic and acidic residues over residues 345–355 (QNPEVRAHPMK) and 404–413 (QDSFNKESIK). Positions 455–471 (VPSNTTISSSPPLTSPV) are enriched in low complexity. Polar residues-rich tracts occupy residues 472–498 (KTSA…QSAA) and 508–527 (YYNT…QKVS). A compositionally biased stretch (low complexity) spans 544 to 554 (TTPTNSSTTAT). The C2H2-type 1 zinc finger occupies 572–603 (VRCTLQNRVTGEICNTVFSRTYDLIRHQDTIH). The C2H2-type 2; degenerate zinc-finger motif lies at 610–635 (FRCEICGDQRHFSRHDALVRHLRVKH).

Its subcellular location is the nucleus. The sequence is that of Zinc finger protein rsv2 (rsv2) from Schizosaccharomyces pombe (strain 972 / ATCC 24843) (Fission yeast).